Reading from the N-terminus, the 374-residue chain is MPGVRWVRIVGVACAALSALALSVTSASATSRIKDLANIEGVRQNQLIGYGLVVGLNGTGDTLNNIPFTKQSLQAMLERMGVNIRGATIRTGNVAAVMVTGNLPAFATQGTRMDVTVSALGDAKNLQGGTLLVTPLLGADGNVYAVAQGSLAISGFQAEGEAAKIVRGVPTVGRIANGAIIEREIEFALNRLPNVRLALRNADFTTAKRIAAAVNDYLGVKTAEPIDPSTVQLSIPPEFKGNVVAFLTEIEQLQVDPDLAAKIVIDERSGIIVMGRDVRVATVAVAQGNLTVTISESPQVSQPNPLSRGRTVVAPRSSVSVTEDGRKLALVKDGVSLQQLVDGLNGLGIGPRDMISILQAIKAAGAIEADIEVM.

The N-terminal stretch at M1–A29 is a signal peptide.

The protein belongs to the FlgI family. The basal body constitutes a major portion of the flagellar organelle and consists of four rings (L,P,S, and M) mounted on a central rod.

It is found in the periplasm. Its subcellular location is the bacterial flagellum basal body. Functionally, assembles around the rod to form the L-ring and probably protects the motor/basal body from shearing forces during rotation. The chain is Flagellar P-ring protein 1 from Bradyrhizobium diazoefficiens (strain JCM 10833 / BCRC 13528 / IAM 13628 / NBRC 14792 / USDA 110).